The chain runs to 328 residues: MPNLHLVRSLKLHGDRCWSVDISKGLLATGSADRKIKLVDVRNFKLVEELDDTAHKKAVRSVAWRPHCNVLAAGSFDTTVSIWGRDDDDYSGETELLAVIEGHENEVKSVAWSHDGAYLATCSRDKSVWIWEADELSEEFECNSVLQEHSQDVKHIVWHASRLLLASSSYDDTVRIWAEQDDDWECAAVLSGHGGTVWCSDFERAETGIRLCSGSDDTTVRIWRCLTDDADVFDKEWIQETVLPAVHTRAVYSVSWSADGLIASVGSDGVLAVYKEVQAGRWEVVARVDCAHTVYEINVVKWLALDGRVLLVTGGDDGCVNVWELREE.

7 WD repeats span residues 12–49 (LHGDRCWSVDISKGLLATGSADRKIKLVDVRNFKLVEE), 54–93 (AHKKAVRSVAWRPHCNVLAAGSFDTTVSIWGRDDDDYSGE), 102–141 (GHENEVKSVAWSHDGAYLATCSRDKSVWIWEADELSEEFE), 148–187 (EHSQDVKHIVWHASRLLLASSSYDDTVRIWAEQDDDWECA), 192–233 (GHGG…ADVF), 246–284 (VHTRAVYSVSWSADGLIASVGSDGVLAVYKEVQAGRWEV), and 291–328 (AHTVYEINVVKWLALDGRVLLVTGGDDGCVNVWELREE).

This sequence belongs to the WD repeat CIA1 family. Interacts with NAR1.

It is found in the cytoplasm. It localises to the nucleus. In terms of biological role, essential component of the cytosolic iron-sulfur (Fe/S) protein assembly machinery. Required for the maturation of extramitochondrial Fe/S proteins. The sequence is that of Probable cytosolic iron-sulfur protein assembly protein 1 from Eremothecium gossypii (strain ATCC 10895 / CBS 109.51 / FGSC 9923 / NRRL Y-1056) (Yeast).